A 472-amino-acid polypeptide reads, in one-letter code: ATP synthase subunit beta (472 aa).

155-162 is an ATP binding site; the sequence is GGAGVGKT.

This sequence belongs to the ATPase alpha/beta chains family. As to quaternary structure, F-type ATPases have 2 components, CF(1) - the catalytic core - and CF(0) - the membrane proton channel. CF(1) has five subunits: alpha(3), beta(3), gamma(1), delta(1), epsilon(1). CF(0) has three main subunits: a(1), b(2) and c(9-12). The alpha and beta chains form an alternating ring which encloses part of the gamma chain. CF(1) is attached to CF(0) by a central stalk formed by the gamma and epsilon chains, while a peripheral stalk is formed by the delta and b chains.

The protein resides in the cell inner membrane. It catalyses the reaction ATP + H2O + 4 H(+)(in) = ADP + phosphate + 5 H(+)(out). Its function is as follows. Produces ATP from ADP in the presence of a proton gradient across the membrane. The catalytic sites are hosted primarily by the beta subunits. The chain is ATP synthase subunit beta from Fervidobacterium nodosum (strain ATCC 35602 / DSM 5306 / Rt17-B1).